Here is a 356-residue protein sequence, read N- to C-terminus: Putative methylthioribose-1-phosphate isomerase (356 aa).

Substrate contacts are provided by residues 57 to 59, R100, and Q206; that span reads RGA. The Proton donor role is filled by D247. A substrate-binding site is contributed by 257–258; the sequence is NK.

Belongs to the eIF-2B alpha/beta/delta subunits family. MtnA subfamily.

It carries out the reaction 5-(methylsulfanyl)-alpha-D-ribose 1-phosphate = 5-(methylsulfanyl)-D-ribulose 1-phosphate. Its function is as follows. Catalyzes the interconversion of methylthioribose-1-phosphate (MTR-1-P) into methylthioribulose-1-phosphate (MTRu-1-P). This is Putative methylthioribose-1-phosphate isomerase from Pyrococcus furiosus (strain ATCC 43587 / DSM 3638 / JCM 8422 / Vc1).